A 332-amino-acid polypeptide reads, in one-letter code: ATPase GET3 (332 aa).

32 to 39 provides a ligand contact to ATP; sequence KGGVGKTT. Asp-61 is a catalytic residue. ATP contacts are provided by Glu-235 and Asn-262. Residues Cys-273 and Cys-276 each contribute to the Zn(2+) site.

The protein belongs to the arsA ATPase family. As to quaternary structure, homodimer.

It is found in the cytoplasm. Its subcellular location is the endoplasmic reticulum. ATPase required for the post-translational delivery of tail-anchored (TA) proteins to the endoplasmic reticulum. Recognizes and selectively binds the transmembrane domain of TA proteins in the cytosol. This complex then targets to the endoplasmic reticulum by membrane-bound receptors, where the tail-anchored protein is released for insertion. This process is regulated by ATP binding and hydrolysis. ATP binding drives the homodimer towards the closed dimer state, facilitating recognition of newly synthesized TA membrane proteins. ATP hydrolysis is required for insertion. Subsequently, the homodimer reverts towards the open dimer state, lowering its affinity for the membrane-bound receptor, and returning it to the cytosol to initiate a new round of targeting. The sequence is that of ATPase GET3 from Mycosarcoma maydis (Corn smut fungus).